A 218-amino-acid polypeptide reads, in one-letter code: uncharacterized protein (218 aa).

It belongs to the mimivirus L6/L7/L57 family.

This is an uncharacterized protein from Acanthamoeba polyphaga mimivirus (APMV).